Consider the following 337-residue polypeptide: Glyceraldehyde-3-phosphate dehydrogenase 3, cytosolic (337 aa).

NAD(+)-binding positions include 13 to 14 (RI), aspartate 35, and arginine 82. D-glyceraldehyde 3-phosphate contacts are provided by residues 153–155 (SCT), threonine 184, 213–214 (TG), and arginine 236. The active-site Nucleophile is the cysteine 154. NAD(+) is bound at residue asparagine 318.

The protein belongs to the glyceraldehyde-3-phosphate dehydrogenase family. In terms of assembly, homotetramer.

It localises to the cytoplasm. It carries out the reaction D-glyceraldehyde 3-phosphate + phosphate + NAD(+) = (2R)-3-phospho-glyceroyl phosphate + NADH + H(+). Its pathway is carbohydrate degradation; glycolysis; pyruvate from D-glyceraldehyde 3-phosphate: step 1/5. Its function is as follows. Key enzyme in glycolysis that catalyzes the first step of the pathway by converting D-glyceraldehyde 3-phosphate (G3P) into 3-phospho-D-glyceroyl phosphate. Essential for the maintenance of cellular ATP levels and carbohydrate metabolism. The polypeptide is Glyceraldehyde-3-phosphate dehydrogenase 3, cytosolic (GAPC3) (Oryza sativa subsp. japonica (Rice)).